The following is a 334-amino-acid chain: MKHFLRMLIQVCLYFYCKFLWRCLKFVMRKLTGRCELQRICYNTKPGASRTMKIETSLRDSKSKLLQTSVSVHPDAIEKTIEDIMELKKINPDVNPQLGISLQACLLQIVGYRNLIADVEKLRREAYDSDNPQHEEMLLKLWKFLKPNTPLESRISKQWCEIGFQGDDPKTDFRGMGLLGLYNLQYFAERDATAAQQVLSDSLHPKCRDITKEEISKFSKAEWEKKRMDKAIGYSFAIVGINITDLAYNLLVSGALKTHFYNIAPEAPTLSHFQQTFCYLMHEFHKFWIEEDPMDIMEFNRVREKFRKRIIKQLQNPDMALCPHFAASEGLINM.

Residues 133–314 (QHEEMLLKLW…KFRKRIIKQL (182 aa)) form the ELMO domain.

Its function is as follows. Acts as a GTPase-activating protein (GAP) toward guanine nucleotide exchange factors like ARL2, ARL3, ARF1 and ARF6, but not for GTPases outside the Arf family. This Homo sapiens (Human) protein is ELMO domain-containing protein 1 (ELMOD1).